A 163-amino-acid chain; its full sequence is UPF0303 protein SAV_5210 (163 aa).

The protein belongs to the UPF0303 family.

This is UPF0303 protein SAV_5210 from Streptomyces avermitilis (strain ATCC 31267 / DSM 46492 / JCM 5070 / NBRC 14893 / NCIMB 12804 / NRRL 8165 / MA-4680).